We begin with the raw amino-acid sequence, 154 residues long: Large ribosomal subunit protein uL22c (154 aa).

Belongs to the universal ribosomal protein uL22 family. As to quaternary structure, part of the 50S ribosomal subunit.

It localises to the plastid. The protein resides in the chloroplast. In terms of biological role, this protein binds specifically to 23S rRNA. Functionally, the globular domain of the protein is located near the polypeptide exit tunnel on the outside of the subunit, while an extended beta-hairpin is found that lines the wall of the exit tunnel in the center of the 70S ribosome. This is Large ribosomal subunit protein uL22c (rpl22) from Jasminum nudiflorum (Winter jasmine).